We begin with the raw amino-acid sequence, 134 residues long: MLSPKRTKFRRPHRGHRRGRALRGNTIAFGDFAIQALESSWVTSRQIEAARRAMTRYARRGGKIWIRIFPDKAITMRPAETRMGSGKGSPEYWVAVVKAQKILFEMKGVPETIARASMRIACFKMPMKTRILQR.

Belongs to the universal ribosomal protein uL16 family. In terms of assembly, part of the 50S ribosomal subunit.

It is found in the plastid. Its subcellular location is the chloroplast. In Nephroselmis olivacea (Green alga), this protein is Large ribosomal subunit protein uL16c.